A 94-amino-acid polypeptide reads, in one-letter code: Co-chaperonin GroES (94 aa).

It belongs to the GroES chaperonin family. As to quaternary structure, heptamer of 7 subunits arranged in a ring. Interacts with the chaperonin GroEL.

The protein resides in the cytoplasm. Functionally, together with the chaperonin GroEL, plays an essential role in assisting protein folding. The GroEL-GroES system forms a nano-cage that allows encapsulation of the non-native substrate proteins and provides a physical environment optimized to promote and accelerate protein folding. GroES binds to the apical surface of the GroEL ring, thereby capping the opening of the GroEL channel. This chain is Co-chaperonin GroES, found in Ehrlichia chaffeensis (strain ATCC CRL-10679 / Arkansas).